We begin with the raw amino-acid sequence, 420 residues long: Cytochrome P-450 monooxygenase DoxA (420 aa).

A heme-binding site is contributed by C367.

Belongs to the cytochrome P450 family. In terms of assembly, monomer. Requires heme as cofactor.

It localises to the cytoplasm. It carries out the reaction 13-deoxydaunorubicin + NADPH + O2 + H(+) = 13-dihydrodaunorubicin + NADP(+) + H2O. The catalysed reaction is 13-dihydrodaunorubicin + NADPH + O2 + H(+) = daunorubicin + NADP(+) + 2 H2O. The enzyme catalyses 13-deoxycarminomycin + NADPH + O2 + H(+) = 13-dihydrocarminomycin + NADP(+) + H2O. It catalyses the reaction 13-dihydrocarminomycin + NADPH + O2 + H(+) = carminomycin + NADP(+) + 2 H2O. It carries out the reaction daunorubicin + NADPH + O2 + H(+) = doxorubicin + NADP(+) + H2O. Its pathway is antibiotic biosynthesis; daunorubicin biosynthesis. It participates in antibiotic biosynthesis; carminomycin biosynthesis. The protein operates within antibiotic biosynthesis; doxorubicin biosynthesis. Functionally, involved in the biosynthesis of the anthracyclines carminomycin, daunorubicin (daunomycin) and doxorubicin (adriamycin) which are aromatic polyketide antibiotics that exhibit high cytotoxicity and are widely applied in the chemotherapy of a variety of cancers. In vivo, DoxA catalyzes the C-13 hydroxylation of 13-deoxycarminomycin and 13-deoxydaunorubicin to yield 13-dihydrocarminomycin and 13-dihydrodaunorubicin, respectively, as well as the oxidation of these 13-dihydro-anthracyclines to their respective 13-keto forms, carminomycin and daunorubicin. In vivo, it also catalyzes the C-14 hydroxylation of daunorubicin to form doxorubicin. It can only use NADP. DoxA acts jointly with DnrV. The polypeptide is Cytochrome P-450 monooxygenase DoxA (doxA) (Streptomyces peucetius subsp. caesius).